We begin with the raw amino-acid sequence, 266 residues long: 4-hydroxy-tetrahydrodipicolinate reductase (266 aa).

Residues 8 to 13 (GAAGRM) and Glu33 contribute to the NAD(+) site. NADP(+) is bound at residue Arg34. NAD(+) contacts are provided by residues 97–99 (GST) and 121–124 (APNM). The active-site Proton donor/acceptor is the His154. Position 155 (His155) interacts with (S)-2,3,4,5-tetrahydrodipicolinate. The active-site Proton donor is the Lys158. 164 to 165 (GT) is a binding site for (S)-2,3,4,5-tetrahydrodipicolinate.

The protein belongs to the DapB family.

Its subcellular location is the cytoplasm. The catalysed reaction is (S)-2,3,4,5-tetrahydrodipicolinate + NAD(+) + H2O = (2S,4S)-4-hydroxy-2,3,4,5-tetrahydrodipicolinate + NADH + H(+). The enzyme catalyses (S)-2,3,4,5-tetrahydrodipicolinate + NADP(+) + H2O = (2S,4S)-4-hydroxy-2,3,4,5-tetrahydrodipicolinate + NADPH + H(+). Its pathway is amino-acid biosynthesis; L-lysine biosynthesis via DAP pathway; (S)-tetrahydrodipicolinate from L-aspartate: step 4/4. In terms of biological role, catalyzes the conversion of 4-hydroxy-tetrahydrodipicolinate (HTPA) to tetrahydrodipicolinate. The sequence is that of 4-hydroxy-tetrahydrodipicolinate reductase from Trichlorobacter lovleyi (strain ATCC BAA-1151 / DSM 17278 / SZ) (Geobacter lovleyi).